The following is a 178-amino-acid chain: Ribosome maturation factor RimM (178 aa).

In terms of domain architecture, PRC barrel spans 101–178 (DGEYYWYQLQ…EMKVEWDADF (78 aa)).

It belongs to the RimM family. As to quaternary structure, binds ribosomal protein uS19.

Its subcellular location is the cytoplasm. An accessory protein needed during the final step in the assembly of 30S ribosomal subunit, possibly for assembly of the head region. Essential for efficient processing of 16S rRNA. May be needed both before and after RbfA during the maturation of 16S rRNA. It has affinity for free ribosomal 30S subunits but not for 70S ribosomes. In Pseudomonas fluorescens (strain ATCC BAA-477 / NRRL B-23932 / Pf-5), this protein is Ribosome maturation factor RimM.